The primary structure comprises 117 residues: Small ribosomal subunit protein bS6 (117 aa).

Residues 96-117 (KEAAAPAPKAAPVESAPAVEAE) form a disordered region. Over residues 99–117 (AAPAPKAAPVESAPAVEAE) the composition is skewed to low complexity.

It belongs to the bacterial ribosomal protein bS6 family.

In terms of biological role, binds together with bS18 to 16S ribosomal RNA. The polypeptide is Small ribosomal subunit protein bS6 (Geobacter sulfurreducens (strain ATCC 51573 / DSM 12127 / PCA)).